Consider the following 299-residue polypeptide: Pyridoxal 5'-phosphate synthase subunit PdxS (299 aa).

Asp24 is a D-ribose 5-phosphate binding site. Lys81 acts as the Schiff-base intermediate with D-ribose 5-phosphate in catalysis. Gly153 is a D-ribose 5-phosphate binding site. Arg165 provides a ligand contact to D-glyceraldehyde 3-phosphate. Residues Gly219 and 240–241 (GS) contribute to the D-ribose 5-phosphate site.

This sequence belongs to the PdxS/SNZ family. In terms of assembly, in the presence of PdxT, forms a dodecamer of heterodimers.

The catalysed reaction is aldehydo-D-ribose 5-phosphate + D-glyceraldehyde 3-phosphate + L-glutamine = pyridoxal 5'-phosphate + L-glutamate + phosphate + 3 H2O + H(+). It functions in the pathway cofactor biosynthesis; pyridoxal 5'-phosphate biosynthesis. Its function is as follows. Catalyzes the formation of pyridoxal 5'-phosphate from ribose 5-phosphate (RBP), glyceraldehyde 3-phosphate (G3P) and ammonia. The ammonia is provided by the PdxT subunit. Can also use ribulose 5-phosphate and dihydroxyacetone phosphate as substrates, resulting from enzyme-catalyzed isomerization of RBP and G3P, respectively. The sequence is that of Pyridoxal 5'-phosphate synthase subunit PdxS from Methanococcus maripaludis (strain C5 / ATCC BAA-1333).